Reading from the N-terminus, the 237-residue chain is Sugar fermentation stimulation protein homolog (237 aa).

Belongs to the SfsA family.

The sequence is that of Sugar fermentation stimulation protein homolog from Pseudomonas putida (strain W619).